The following is a 255-amino-acid chain: Taurine import ATP-binding protein TauB (255 aa).

Residues L2–S229 form the ABC transporter domain. G34–T41 provides a ligand contact to ATP.

This sequence belongs to the ABC transporter superfamily. Taurine importer (TC 3.A.1.17.1) family. As to quaternary structure, the complex is composed of two ATP-binding proteins (TauB), two transmembrane proteins (TauC) and a solute-binding protein (TauA).

It localises to the cell inner membrane. The enzyme catalyses taurine(out) + ATP + H2O = taurine(in) + ADP + phosphate + H(+). Part of the ABC transporter complex TauABC involved in taurine import. Responsible for energy coupling to the transport system. The chain is Taurine import ATP-binding protein TauB from Shigella flexneri.